Consider the following 670-residue polypeptide: tRNA 5-methylaminomethyl-2-thiouridine biosynthesis bifunctional protein MnmC (670 aa).

The tract at residues 1-245 (MKPIAIQPAS…KREMLTGALS (245 aa)) is tRNA (mnm(5)s(2)U34)-methyltransferase. The FAD-dependent cmnm(5)s(2)U34 oxidoreductase stretch occupies residues 271–670 (VGGGIASALL…RKLLKGRAAS (400 aa)).

In the N-terminal section; belongs to the methyltransferase superfamily. tRNA (mnm(5)s(2)U34)-methyltransferase family. It in the C-terminal section; belongs to the DAO family. The cofactor is FAD.

The protein resides in the cytoplasm. The enzyme catalyses 5-aminomethyl-2-thiouridine(34) in tRNA + S-adenosyl-L-methionine = 5-methylaminomethyl-2-thiouridine(34) in tRNA + S-adenosyl-L-homocysteine + H(+). Its function is as follows. Catalyzes the last two steps in the biosynthesis of 5-methylaminomethyl-2-thiouridine (mnm(5)s(2)U) at the wobble position (U34) in tRNA. Catalyzes the FAD-dependent demodification of cmnm(5)s(2)U34 to nm(5)s(2)U34, followed by the transfer of a methyl group from S-adenosyl-L-methionine to nm(5)s(2)U34, to form mnm(5)s(2)U34. The polypeptide is tRNA 5-methylaminomethyl-2-thiouridine biosynthesis bifunctional protein MnmC (Cronobacter sakazakii (strain ATCC BAA-894) (Enterobacter sakazakii)).